Consider the following 336-residue polypeptide: Protein-glutamate methylesterase/protein-glutamine glutaminase 1 (336 aa).

The 118-residue stretch at Lys-2 to Leu-119 folds into the Response regulatory domain. 4-aspartylphosphate is present on Asp-53. The 194-residue stretch at Pro-143–Lys-336 folds into the CheB-type methylesterase domain. Residues Ser-159, His-186, and Asp-279 contribute to the active site.

It belongs to the CheB family. Phosphorylated by CheA. Phosphorylation of the N-terminal regulatory domain activates the methylesterase activity.

It is found in the cytoplasm. It carries out the reaction [protein]-L-glutamate 5-O-methyl ester + H2O = L-glutamyl-[protein] + methanol + H(+). It catalyses the reaction L-glutaminyl-[protein] + H2O = L-glutamyl-[protein] + NH4(+). Involved in chemotaxis. Part of a chemotaxis signal transduction system that modulates chemotaxis in response to various stimuli. Catalyzes the demethylation of specific methylglutamate residues introduced into the chemoreceptors (methyl-accepting chemotaxis proteins or MCP) by CheR. Also mediates the irreversible deamidation of specific glutamine residues to glutamic acid. The sequence is that of Protein-glutamate methylesterase/protein-glutamine glutaminase 1 from Pseudomonas fluorescens (strain ATCC BAA-477 / NRRL B-23932 / Pf-5).